Consider the following 447-residue polypeptide: Pentatricopeptide repeat-containing protein At3g53170 (447 aa).

PPR repeat units lie at residues 93–127 (RCKT…GLKP), 128–158 (TIDV…MKSV), 164–198 (DVFT…GVGC), 199–233 (STVT…GDSL), 235–269 (DVCT…GVQP), 270–304 (DITT…FFSL), 305–339 (TTVT…GVKP), 340–374 (NSIT…DVVL), 375–409 (DTPF…KCKP), and 410–444 (DKIT…GENL).

It belongs to the PPR family. P subfamily.

The chain is Pentatricopeptide repeat-containing protein At3g53170 from Arabidopsis thaliana (Mouse-ear cress).